A 210-amino-acid chain; its full sequence is Large ribosomal subunit protein bL25 (210 aa).

It belongs to the bacterial ribosomal protein bL25 family. CTC subfamily. As to quaternary structure, part of the 50S ribosomal subunit; part of the 5S rRNA/L5/L18/L25 subcomplex. Contacts the 5S rRNA. Binds to the 5S rRNA independently of L5 and L18.

In terms of biological role, this is one of the proteins that binds to the 5S RNA in the ribosome where it forms part of the central protuberance. This is Large ribosomal subunit protein bL25 from Herminiimonas arsenicoxydans.